A 504-amino-acid chain; its full sequence is L-carnitine/gamma-butyrobetaine antiporter (504 aa).

The next 12 membrane-spanning stretches (helical) occupy residues 10–30 (IEPK…WLTV), 51–71 (WGWA…WLVF), 92–112 (IFMM…SIEI), 143–163 (GPLP…FFFV), 195–215 (FYLV…TPLV), 231–251 (LDAI…ACGL), 263–283 (SYLS…SFIM), 316–336 (WTVF…IFLA), 347–367 (LCFG…TVLG), 398–418 (WAAL…CFIA), 446–466 (LLVR…LLAL), and 475–495 (AIIA…LSFI).

Belongs to the BCCT transporter (TC 2.A.15) family. CaiT subfamily. As to quaternary structure, homotrimer.

The protein localises to the cell inner membrane. The enzyme catalyses 4-(trimethylamino)butanoate(in) + (R)-carnitine(out) = 4-(trimethylamino)butanoate(out) + (R)-carnitine(in). The protein operates within amine and polyamine metabolism; carnitine metabolism. Functionally, catalyzes the exchange of L-carnitine for gamma-butyrobetaine. This chain is L-carnitine/gamma-butyrobetaine antiporter, found in Escherichia coli (strain K12 / MC4100 / BW2952).